The chain runs to 93 residues: Acylphosphatase (93 aa).

One can recognise an Acylphosphatase-like domain in the interval 5–93 (CIIAWVHGRV…EELTGFRIRY (89 aa)). Catalysis depends on residues R20 and N38.

It belongs to the acylphosphatase family.

It carries out the reaction an acyl phosphate + H2O = a carboxylate + phosphate + H(+). The chain is Acylphosphatase (acyP) from Citrobacter koseri (strain ATCC BAA-895 / CDC 4225-83 / SGSC4696).